Here is a 466-residue protein sequence, read N- to C-terminus: Uronate isomerase (466 aa).

Belongs to the metallo-dependent hydrolases superfamily. Uronate isomerase family.

It carries out the reaction D-glucuronate = D-fructuronate. The catalysed reaction is aldehydo-D-galacturonate = keto-D-tagaturonate. Its pathway is carbohydrate metabolism; pentose and glucuronate interconversion. This chain is Uronate isomerase (uxaC), found in Brucella melitensis biotype 1 (strain ATCC 23456 / CCUG 17765 / NCTC 10094 / 16M).